A 182-amino-acid chain; its full sequence is UPF0316 protein BCG9842_B1857 (182 aa).

The next 3 membrane-spanning stretches (helical) occupy residues Leu6 to Val26, Ser32 to Phe52, and Trp58 to Ile78.

The protein belongs to the UPF0316 family.

It is found in the cell membrane. The polypeptide is UPF0316 protein BCG9842_B1857 (Bacillus cereus (strain G9842)).